The sequence spans 543 residues: Hydroxylamine reductase (543 aa).

The [4Fe-4S] cluster site is built by cysteine 5, cysteine 8, cysteine 17, and cysteine 23. Hybrid [4Fe-2O-2S] cluster-binding residues include histidine 250, glutamate 274, cysteine 318, cysteine 410, cysteine 438, cysteine 463, glutamate 498, and lysine 500. A Cysteine persulfide modification is found at cysteine 410.

This sequence belongs to the HCP family. The cofactor is [4Fe-4S] cluster. It depends on hybrid [4Fe-2O-2S] cluster as a cofactor.

Its subcellular location is the cytoplasm. It catalyses the reaction A + NH4(+) + H2O = hydroxylamine + AH2 + H(+). In terms of biological role, catalyzes the reduction of hydroxylamine to form NH(3) and H(2)O. In Petrotoga mobilis (strain DSM 10674 / SJ95), this protein is Hydroxylamine reductase.